We begin with the raw amino-acid sequence, 484 residues long: tRNA-2-methylthio-N(6)-dimethylallyladenosine synthase (484 aa).

The MTTase N-terminal domain occupies 29–149 (GVFHIHTLGC…LPKLLDQNRA (121 aa)). [4Fe-4S] cluster is bound by residues Cys38, Cys78, Cys112, Cys186, Cys190, and Cys193. One can recognise a Radical SAM core domain in the interval 172 to 401 (RASRISSWVA…VALQEQITEE (230 aa)). Positions 404 to 474 (ATFEGRDVEV…RHNLLADPDV (71 aa)) constitute a TRAM domain.

The protein belongs to the methylthiotransferase family. MiaB subfamily. Monomer. Requires [4Fe-4S] cluster as cofactor.

It localises to the cytoplasm. It carries out the reaction N(6)-dimethylallyladenosine(37) in tRNA + (sulfur carrier)-SH + AH2 + 2 S-adenosyl-L-methionine = 2-methylsulfanyl-N(6)-dimethylallyladenosine(37) in tRNA + (sulfur carrier)-H + 5'-deoxyadenosine + L-methionine + A + S-adenosyl-L-homocysteine + 2 H(+). Functionally, catalyzes the methylthiolation of N6-(dimethylallyl)adenosine (i(6)A), leading to the formation of 2-methylthio-N6-(dimethylallyl)adenosine (ms(2)i(6)A) at position 37 in tRNAs that read codons beginning with uridine. The polypeptide is tRNA-2-methylthio-N(6)-dimethylallyladenosine synthase (Bifidobacterium longum (strain DJO10A)).